We begin with the raw amino-acid sequence, 490 residues long: Cysteine--tRNA ligase (490 aa).

Cys43 is a binding site for Zn(2+). The 'HIGH' region motif lies at 45 to 55 (MTVQSSPHLGH). Residues 177–204 (VDEMSPAEDSDPRGKRDPRDFALWKGHK) form a disordered region. Over residues 186 to 204 (SDPRGKRDPRDFALWKGHK) the composition is skewed to basic and acidic residues. 3 residues coordinate Zn(2+): Cys228, His253, and Glu257. The 'KMSKS' region motif lies at 284–288 (KMSKS). Lys287 contributes to the ATP binding site.

Belongs to the class-I aminoacyl-tRNA synthetase family. As to quaternary structure, monomer. Requires Zn(2+) as cofactor.

The protein resides in the cytoplasm. It catalyses the reaction tRNA(Cys) + L-cysteine + ATP = L-cysteinyl-tRNA(Cys) + AMP + diphosphate. The protein is Cysteine--tRNA ligase of Cutibacterium acnes (strain DSM 16379 / KPA171202) (Propionibacterium acnes).